The following is a 448-amino-acid chain: Dual specificity mitogen-activated protein kinase kinase 5 (448 aa).

Positions 18 to 25 are interaction with MAPK7; that stretch reads VIRIKIPN. Residues 18-109 form the PB1 domain; sequence VIRIKIPNSG…EPLQIFPRAC (92 aa). An interaction with MAP3K2/MAP3K3 region spans residues 64–68; sequence DEDGD. A disordered region spans residues 116 to 144; that stretch reads NIHGLKVNTRAGPSQHTSPVVSDSLPSNS. Residues 117–131 form an interaction with MAPK7 region; sequence IHGLKVNTRAGPSQH. The span at 126–144 shows a compositional bias: polar residues; the sequence is AGPSQHTSPVVSDSLPSNS. The Protein kinase domain maps to 166 to 419; it reads IRYRDTLGHG…PEELMGHPFI (254 aa). ATP-binding positions include 172-180 and Lys-195; that span reads LGHGNGGTV. The active-site Proton acceptor is Asp-283. Ser-311 carries the phosphoserine modification. At Thr-315 the chain carries Phosphothreonine.

This sequence belongs to the protein kinase superfamily. STE Ser/Thr protein kinase family. MAP kinase kinase subfamily. As to quaternary structure, interacts with PARD6A, MAP3K3 and MAPK7. Forms a complex with SQSTM1 and PRKCZ or PRKCI. It depends on Mg(2+) as a cofactor. Activated by phosphorylation on Ser/Thr by MAP kinase kinase kinases.

It localises to the cytoplasm. The catalysed reaction is L-seryl-[protein] + ATP = O-phospho-L-seryl-[protein] + ADP + H(+). The enzyme catalyses L-threonyl-[protein] + ATP = O-phospho-L-threonyl-[protein] + ADP + H(+). It catalyses the reaction L-tyrosyl-[protein] + ATP = O-phospho-L-tyrosyl-[protein] + ADP + H(+). Functionally, acts as a scaffold for the formation of a ternary MAP3K2/MAP3K3-MAP3K5-MAPK7 signaling complex. Activation of this pathway appears to play a critical role in protecting cells from stress-induced apoptosis, neuronal survival and cardiac development and angiogenesis. As part of the MAPK/ERK signaling pathway, acts as a negative regulator of apoptosis in cardiomyocytes via promotion of STUB1/CHIP-mediated ubiquitination and degradation of ICER-type isoforms of CREM. The polypeptide is Dual specificity mitogen-activated protein kinase kinase 5 (Map2k5) (Mus musculus (Mouse)).